The primary structure comprises 363 residues: Des-methyl DIF-1 methyltransferase A (363 aa).

Glycine 195, aspartate 221, aspartate 250, leucine 251, and lysine 266 together coordinate S-adenosyl-L-methionine. The active-site Proton acceptor is histidine 270.

The protein belongs to the class I-like SAM-binding methyltransferase superfamily. Cation-independent O-methyltransferase family. COMT subfamily.

It catalyses the reaction (3,5-dichloro-2,4,6-trihydroxyphenyl)hexan-1-one + S-adenosyl-L-methionine = 1-(3,5-dichloro-2,6-dihydroxy-4-methoxyphenyl)hexan-1-one + S-adenosyl-L-homocysteine + H(+). Functionally, O-methyltransferase; part of the gene cluster that mediates the biosynthesis of DIF-1 (Differentiation Inducing Factor-1), a signal molecule involved in the differentiation of pstO (prestalk-O) cells. The three-step process begins with the formation of (2,4,6-trihydroxyphenyl)-1-hexan-1-one (THPH) by the polyketide synthase StlB. THPH is then dichlorinated by the flavin-dependent halogenase ChlA. The last step of DIF-1 biosynthesis is the O-methylation of dichloro-THPH (or des-methyl-DIF-1) by the methyltransferase DmtA to yield DIF-1. The sequence is that of Des-methyl DIF-1 methyltransferase A from Dictyostelium discoideum (Social amoeba).